We begin with the raw amino-acid sequence, 180 residues long: Guanosine-3',5'-bis(diphosphate) 3'-pyrophosphohydrolase MESH1 (180 aa).

One can recognise an HD domain in the interval Y33–L128. Mn(2+)-binding residues include H36, H62, and D63. Residues E66 and D67 each act as nucleophile in the active site. D123 is a binding site for Mn(2+).

It belongs to the MESH1 family. Mn(2+) serves as cofactor.

The catalysed reaction is guanosine 3',5'-bis(diphosphate) + H2O = GDP + diphosphate + H(+). Its function is as follows. ppGpp hydrolyzing enzyme involved in starvation response. The protein is Guanosine-3',5'-bis(diphosphate) 3'-pyrophosphohydrolase MESH1 (hddc3) of Danio rerio (Zebrafish).